The following is a 293-amino-acid chain: Formamidopyrimidine-DNA glycosylase (293 aa).

P2 (schiff-base intermediate with DNA) is an active-site residue. E3 serves as the catalytic Proton donor. K58 serves as the catalytic Proton donor; for beta-elimination activity. DNA contacts are provided by H104, R123, and K166. The FPG-type zinc finger occupies 257 to 293; the sequence is AVYDREGERCRTPGCNGTVKRLVQNGRSTFWCSGCQT. The active-site Proton donor; for delta-elimination activity is the R283.

The protein belongs to the FPG family. In terms of assembly, monomer. The cofactor is Zn(2+).

It catalyses the reaction Hydrolysis of DNA containing ring-opened 7-methylguanine residues, releasing 2,6-diamino-4-hydroxy-5-(N-methyl)formamidopyrimidine.. The enzyme catalyses 2'-deoxyribonucleotide-(2'-deoxyribose 5'-phosphate)-2'-deoxyribonucleotide-DNA = a 3'-end 2'-deoxyribonucleotide-(2,3-dehydro-2,3-deoxyribose 5'-phosphate)-DNA + a 5'-end 5'-phospho-2'-deoxyribonucleoside-DNA + H(+). Its function is as follows. Involved in base excision repair of DNA damaged by oxidation or by mutagenic agents. Acts as a DNA glycosylase that recognizes and removes damaged bases. Has a preference for oxidized purines, such as 7,8-dihydro-8-oxoguanine (8-oxoG). Has AP (apurinic/apyrimidinic) lyase activity and introduces nicks in the DNA strand. Cleaves the DNA backbone by beta-delta elimination to generate a single-strand break at the site of the removed base with both 3'- and 5'-phosphates. The polypeptide is Formamidopyrimidine-DNA glycosylase (Rhodopseudomonas palustris (strain HaA2)).